A 150-amino-acid chain; its full sequence is Macrodomain Ter protein (150 aa).

It belongs to the MatP family. Homodimer.

Its subcellular location is the cytoplasm. Required for spatial organization of the terminus region of the chromosome (Ter macrodomain) during the cell cycle. Prevents early segregation of duplicated Ter macrodomains during cell division. Binds specifically to matS, which is a 13 bp signature motif repeated within the Ter macrodomain. The protein is Macrodomain Ter protein of Escherichia coli O8 (strain IAI1).